Consider the following 602-residue polypeptide: Glutaminase liver isoform, mitochondrial (602 aa).

A mitochondrion-targeting transit peptide spans 1–14 (MRSMRALQNALSRA). 2 disordered regions span residues 1–29 (MRSM…PSRG) and 45–66 (AQGR…ASHS). Serine 219 is a binding site for substrate. Lysine 253 carries the N6-succinyllysine modification. Position 268 (asparagine 268) interacts with substrate. N6-acetyllysine occurs at positions 279 and 284. Residues glutamate 314 and asparagine 321 each contribute to the substrate site. Lysine 329 bears the N6-acetyllysine mark. Residues tyrosine 347, tyrosine 399, and valine 417 each contribute to the substrate site. ANK repeat units lie at residues 518–551 (DSRT…VKDR) and 552–585 (WGNI…SETQ).

This sequence belongs to the glutaminase family. Homotetramer, dimer of dimers. Does not assemble into higher oligomers. Interacts with the PDZ domain of the syntrophin SNTA1. Interacts with the PDZ domain of TAX1BP3.

The protein resides in the mitochondrion. The enzyme catalyses L-glutamine + H2O = L-glutamate + NH4(+). With respect to regulation, enzyme activity is not stimulated by phosphate. Phosphate increases kcat, but decreases substrate affinity, resulting in unchanged enzyme activity. Functionally, plays an important role in the regulation of glutamine catabolism. Promotes mitochondrial respiration and increases ATP generation in cells by catalyzing the synthesis of glutamate and alpha-ketoglutarate. Increases cellular anti-oxidant function via NADH and glutathione production. May play a role in preventing tumor proliferation. The protein is Glutaminase liver isoform, mitochondrial (Gls2) of Mus musculus (Mouse).